Consider the following 206-residue polypeptide: Large ribosomal subunit protein uL4 (206 aa).

It belongs to the universal ribosomal protein uL4 family. Part of the 50S ribosomal subunit.

Its function is as follows. One of the primary rRNA binding proteins, this protein initially binds near the 5'-end of the 23S rRNA. It is important during the early stages of 50S assembly. It makes multiple contacts with different domains of the 23S rRNA in the assembled 50S subunit and ribosome. Forms part of the polypeptide exit tunnel. This chain is Large ribosomal subunit protein uL4, found in Methylorubrum populi (strain ATCC BAA-705 / NCIMB 13946 / BJ001) (Methylobacterium populi).